The sequence spans 516 residues: Maintenance of mitochondrial morphology protein 1 (516 aa).

The Lumenal segment spans residues 1–43 (MAGSTSASLQTPYFPSSTQINPVRVDHTLPLPPAQPSLSFTQG). A helical transmembrane segment spans residues 44 to 64 (LLVGQLSVVLLIGAFIKFFIF). The Cytoplasmic portion of the chain corresponds to 65-516 (GEAPPPPSRG…GSMPDTVTET (452 aa)). Disordered stretches follow at residues 70–118 (PPSR…SSST), 295–349 (TSDQ…SKHG), 420–466 (RTGL…IDRG), and 485–516 (GGHQ…VTET). 3 stretches are compositionally biased toward polar residues: residues 74–96 (GLSN…TDSS), 105–118 (STSN…SSST), and 295–312 (TSDQ…TTSE). The 262-residue stretch at 151-412 (QPESLDWFNV…EPRVQVVGLP (262 aa)) folds into the SMP-LTD domain. The span at 449-460 (GVSGGGGGGGSM) shows a compositional bias: gly residues.

It belongs to the MMM1 family. Homodimer. Component of the ER-mitochondria encounter structure (ERMES) or MDM complex, composed of MMM1, MDM10, MDM12 and MDM34. An MMM1 homodimer associates with one molecule of MDM12 on each side in a pairwise head-to-tail manner, and the SMP-LTD domains of MMM1 and MDM12 generate a continuous hydrophobic tunnel for phospholipid trafficking.

It is found in the endoplasmic reticulum membrane. Functionally, component of the ERMES/MDM complex, which serves as a molecular tether to connect the endoplasmic reticulum (ER) and mitochondria. Components of this complex are involved in the control of mitochondrial shape and protein biogenesis, and function in nonvesicular lipid trafficking between the ER and mitochondria. The MDM12-MMM1 subcomplex functions in the major beta-barrel assembly pathway that is responsible for biogenesis of all outer membrane beta-barrel proteins, and acts in a late step after the SAM complex. The MDM10-MDM12-MMM1 subcomplex further acts in the TOM40-specific pathway after the action of the MDM12-MMM1 complex. Essential for establishing and maintaining the structure of mitochondria and maintenance of mtDNA nucleoids. This is Maintenance of mitochondrial morphology protein 1 from Paracoccidioides brasiliensis (strain Pb18).